The sequence spans 154 residues: Myoglobin (154 aa).

The 147-residue stretch at 2–148 (GLSDGEWQLV…FRNDIAAKYK (147 aa)) folds into the Globin domain. Ser4 carries the phosphoserine modification. His65 serves as a coordination point for nitrite. Residue His65 coordinates O2. Phosphothreonine is present on Thr68. Residue His94 coordinates heme b.

This sequence belongs to the globin family. As to quaternary structure, monomeric.

The protein resides in the cytoplasm. The protein localises to the sarcoplasm. The catalysed reaction is Fe(III)-heme b-[protein] + nitric oxide + H2O = Fe(II)-heme b-[protein] + nitrite + 2 H(+). The enzyme catalyses H2O2 + AH2 = A + 2 H2O. Functionally, monomeric heme protein which primary function is to store oxygen and facilitate its diffusion within muscle tissues. Reversibly binds oxygen through a pentacoordinated heme iron and enables its timely and efficient release as needed during periods of heightened demand. Depending on the oxidative conditions of tissues and cells, and in addition to its ability to bind oxygen, it also has a nitrite reductase activity whereby it regulates the production of bioactive nitric oxide. Under stress conditions, like hypoxia and anoxia, it also protects cells against reactive oxygen species thanks to its pseudoperoxidase activity. The sequence is that of Myoglobin (MB) from Tupaia glis (Common tree shrew).